A 232-amino-acid polypeptide reads, in one-letter code: Putative homeobox protein NANOG2 (232 aa).

The span at 1 to 10 (MDLPIEDSHD) shows a compositional bias: basic and acidic residues. The segment at 1–39 (MDLPIEDSHDSSTSPKGKQPTTAEKSATKKEDKVPVKKQ) is disordered. The span at 11–25 (SSTSPKGKQPTTAEK) shows a compositional bias: polar residues. Residues 26–35 (SATKKEDKVP) are compositionally biased toward basic and acidic residues. Tandem repeats lie at residues 123–127 (WSNQT), 128–132 (WNNSI), 133–137 (WSNET), 143–147 (WSNHS), 148–152 (WNTQT), 153–157 (WCTQS), 158–162 (WNNQA), and 163–167 (WNSPF). The tract at residues 123-167 (WSNQTWNNSIWSNETQNIQSWSNHSWNTQTWCTQSWNNQAWNSPF) is 8 X repeats starting with a Trp in each unit. The segment at 123–167 (WSNQTWNNSIWSNETQNIQSWSNHSWNTQTWCTQSWNNQAWNSPF) is sufficient for transactivation activity. The interval 168–232 (YNCGEESLQS…YSTNMQPEDV (65 aa)) is sufficient for strong transactivation activity.

This sequence belongs to the Nanog homeobox family.

The protein resides in the nucleus. Its function is as follows. Probable transcriptional regulator. The sequence is that of Putative homeobox protein NANOG2 (NANOGP1) from Pan troglodytes (Chimpanzee).